We begin with the raw amino-acid sequence, 360 residues long: D-alanine--D-alanine ligase (360 aa).

The 206-residue stretch at 139–344 (KDVFAQAGLA…YPELIEKLVS (206 aa)) folds into the ATP-grasp domain. 172 to 227 (EQVLGYPCFVKPANMGSSVGISKCRSKEELQTAFDLAFQYDRRVVVEEGVVGREIE) contacts ATP. Mg(2+) is bound by residues Asp-298, Glu-311, and Asn-313.

The protein belongs to the D-alanine--D-alanine ligase family. Requires Mg(2+) as cofactor. Mn(2+) serves as cofactor.

Its subcellular location is the cytoplasm. It carries out the reaction 2 D-alanine + ATP = D-alanyl-D-alanine + ADP + phosphate + H(+). The protein operates within cell wall biogenesis; peptidoglycan biosynthesis. In terms of biological role, cell wall formation. This is D-alanine--D-alanine ligase from Bacillus pumilus (strain SAFR-032).